The following is a 91-amino-acid chain: PqqA binding protein (91 aa).

This sequence belongs to the PqqD family. In terms of assembly, monomer. Interacts with PqqE.

The protein operates within cofactor biosynthesis; pyrroloquinoline quinone biosynthesis. Functionally, functions as a PqqA binding protein and presents PqqA to PqqE, in the pyrroloquinoline quinone (PQQ) biosynthetic pathway. The polypeptide is PqqA binding protein (Pseudomonas fluorescens (strain ATCC BAA-477 / NRRL B-23932 / Pf-5)).